We begin with the raw amino-acid sequence, 238 residues long: MNNDLTADSIIEMISSSKKKTPVIAYVKGHLSDIDMSGVQFFGTDNFGIIFADYEDLRQFLEKNGNKIHDVHIEAKARNSALPMADITKFNARVEPGAVIRDLVKIGDGAVIMMGAIINVGAVIGEKTMIDMNAVIGGRAIIGRNCHIGAGAVIAGVIEPPSATPVVIEDNVMVGANAVVLEGVKVGKGSVVAAGAVVVSDVDPYTVVAGIPAKFIKKVDEKTIEKTKIIEILRQRDH.

It belongs to the transferase hexapeptide repeat family. DapH subfamily.

It catalyses the reaction (S)-2,3,4,5-tetrahydrodipicolinate + acetyl-CoA + H2O = L-2-acetamido-6-oxoheptanedioate + CoA. It functions in the pathway amino-acid biosynthesis; L-lysine biosynthesis via DAP pathway; LL-2,6-diaminopimelate from (S)-tetrahydrodipicolinate (acetylase route): step 1/3. Catalyzes the transfer of an acetyl group from acetyl-CoA to tetrahydrodipicolinate. The protein is 2,3,4,5-tetrahydropyridine-2,6-dicarboxylate N-acetyltransferase of Pseudothermotoga lettingae (strain ATCC BAA-301 / DSM 14385 / NBRC 107922 / TMO) (Thermotoga lettingae).